We begin with the raw amino-acid sequence, 492 residues long: Cytoplasmic dynein 1 light intermediate chain 2 (492 aa).

Residue 61–68 (GEDGSGKT) participates in ATP binding. Disordered stretches follow at residues 188–207 (EEGCQGSPQRRGPLTSGSDE), 370–423 (LAKQ…KNNA), and 437–492 (LSKK…ENEA). Phosphoserine is present on residues Ser-194, Ser-383, and Ser-391. A compositionally biased stretch (polar residues) spans 370-383 (LAKQPATPTRTSES). Omega-N-methylarginine is present on Arg-397. Residues 437–469 (LSKKTGSPGSPSAGGVQSTAKKSGQKTVLSNVQ) are compositionally biased toward polar residues. Thr-441 is modified (phosphothreonine). Phosphoserine is present on residues Ser-443 and Ser-446. Basic and acidic residues predominate over residues 471–480 (ELDRMTRKPD). Residues 482 to 492 (MVTNSSTENEA) show a composition bias toward polar residues.

Belongs to the dynein light intermediate chain family. As to quaternary structure, homodimer. The cytoplasmic dynein 1 complex consists of two catalytic heavy chains (HCs) and a number of non-catalytic subunits presented by intermediate chains (ICs), light intermediate chains (LICs) and light chains (LCs); the composition seems to vary in respect to the IC, LIC and LC composition. The heavy chain homodimer serves as a scaffold for the probable homodimeric assembly of the respective non-catalytic subunits. The ICs and LICs bind directly to the HC dimer and the LCs assemble on the IC dimer. Interacts with DYNC1H1; DYNC1LI1 and DYNC1LI2 bind mutually exclusive to DYNC1H.

It localises to the cytoplasm. The protein resides in the cytoskeleton. Acts as one of several non-catalytic accessory components of the cytoplasmic dynein 1 complex that are thought to be involved in linking dynein to cargos and to adapter proteins that regulate dynein function. Cytoplasmic dynein 1 acts as a motor for the intracellular retrograde motility of vesicles and organelles along microtubules. May play a role in binding dynein to membranous organelles or chromosomes. The protein is Cytoplasmic dynein 1 light intermediate chain 2 (Dync1li2) of Mus musculus (Mouse).